We begin with the raw amino-acid sequence, 245 residues long: 4-hydroxy-tetrahydrodipicolinate reductase (245 aa).

NAD(+)-binding positions include 7–12 (GAKGKV), 75–77 (GTT), and 102–105 (APNF). Catalysis depends on His-132, which acts as the Proton donor/acceptor. His-133 lines the (S)-2,3,4,5-tetrahydrodipicolinate pocket. Lys-136 acts as the Proton donor in catalysis. 142-143 (GT) contributes to the (S)-2,3,4,5-tetrahydrodipicolinate binding site.

It belongs to the DapB family.

It is found in the cytoplasm. It carries out the reaction (S)-2,3,4,5-tetrahydrodipicolinate + NAD(+) + H2O = (2S,4S)-4-hydroxy-2,3,4,5-tetrahydrodipicolinate + NADH + H(+). It catalyses the reaction (S)-2,3,4,5-tetrahydrodipicolinate + NADP(+) + H2O = (2S,4S)-4-hydroxy-2,3,4,5-tetrahydrodipicolinate + NADPH + H(+). The protein operates within amino-acid biosynthesis; L-lysine biosynthesis via DAP pathway; (S)-tetrahydrodipicolinate from L-aspartate: step 4/4. Catalyzes the conversion of 4-hydroxy-tetrahydrodipicolinate (HTPA) to tetrahydrodipicolinate. This Mycobacterium bovis (strain BCG / Pasteur 1173P2) protein is 4-hydroxy-tetrahydrodipicolinate reductase.